The sequence spans 412 residues: Multifunctional CCA protein (412 aa).

Positions 8 and 11 each coordinate ATP. G8 and R11 together coordinate CTP. Mg(2+) is bound by residues E21 and D23. ATP-binding residues include R92, R138, and R141. R92, R138, and R141 together coordinate CTP. The HD domain occupies 227–328 (TGIHTMMTVA…IKLFYAIDVW (102 aa)).

The protein belongs to the tRNA nucleotidyltransferase/poly(A) polymerase family. Bacterial CCA-adding enzyme type 1 subfamily. Monomer. Can also form homodimers and oligomers. Mg(2+) serves as cofactor. Requires Ni(2+) as cofactor.

The enzyme catalyses a tRNA precursor + 2 CTP + ATP = a tRNA with a 3' CCA end + 3 diphosphate. It carries out the reaction a tRNA with a 3' CCA end + 2 CTP + ATP = a tRNA with a 3' CCACCA end + 3 diphosphate. In terms of biological role, catalyzes the addition and repair of the essential 3'-terminal CCA sequence in tRNAs without using a nucleic acid template. Adds these three nucleotides in the order of C, C, and A to the tRNA nucleotide-73, using CTP and ATP as substrates and producing inorganic pyrophosphate. tRNA 3'-terminal CCA addition is required both for tRNA processing and repair. Also involved in tRNA surveillance by mediating tandem CCA addition to generate a CCACCA at the 3' terminus of unstable tRNAs. While stable tRNAs receive only 3'-terminal CCA, unstable tRNAs are marked with CCACCA and rapidly degraded. In Baumannia cicadellinicola subsp. Homalodisca coagulata, this protein is Multifunctional CCA protein.